We begin with the raw amino-acid sequence, 297 residues long: tRNA pseudouridine synthase A (297 aa).

Asp57 acts as the Nucleophile in catalysis. Residue Tyr115 participates in substrate binding.

It belongs to the tRNA pseudouridine synthase TruA family. Homodimer.

The enzyme catalyses uridine(38/39/40) in tRNA = pseudouridine(38/39/40) in tRNA. Its function is as follows. Formation of pseudouridine at positions 38, 39 and 40 in the anticodon stem and loop of transfer RNAs. This is tRNA pseudouridine synthase A from Nitratidesulfovibrio vulgaris (strain ATCC 29579 / DSM 644 / CCUG 34227 / NCIMB 8303 / VKM B-1760 / Hildenborough) (Desulfovibrio vulgaris).